The following is a 331-amino-acid chain: Glycerol-3-phosphate dehydrogenase [NAD(P)+] (331 aa).

5 residues coordinate NADPH: Ser-10, Trp-11, Arg-31, Arg-32, and Lys-105. The sn-glycerol 3-phosphate site is built by Lys-105 and Gly-135. NADPH is bound at residue Ala-139. Residues Lys-190, Asp-243, Ser-253, Arg-254, and Asn-255 each coordinate sn-glycerol 3-phosphate. Catalysis depends on Lys-190, which acts as the Proton acceptor. Position 254 (Arg-254) interacts with NADPH. Val-279 and Glu-281 together coordinate NADPH.

It belongs to the NAD-dependent glycerol-3-phosphate dehydrogenase family.

Its subcellular location is the cytoplasm. It carries out the reaction sn-glycerol 3-phosphate + NAD(+) = dihydroxyacetone phosphate + NADH + H(+). The catalysed reaction is sn-glycerol 3-phosphate + NADP(+) = dihydroxyacetone phosphate + NADPH + H(+). Its pathway is membrane lipid metabolism; glycerophospholipid metabolism. Its function is as follows. Catalyzes the reduction of the glycolytic intermediate dihydroxyacetone phosphate (DHAP) to sn-glycerol 3-phosphate (G3P), the key precursor for phospholipid synthesis. The chain is Glycerol-3-phosphate dehydrogenase [NAD(P)+] from Corynebacterium diphtheriae (strain ATCC 700971 / NCTC 13129 / Biotype gravis).